A 911-amino-acid polypeptide reads, in one-letter code: Chitin synthase G (911 aa).

Disordered regions lie at residues 1-66 and 107-138; these read MAYQ…VSGY and GRVASPYARSDTSSTEAWRQRQAPGGGPGGLR. A compositionally biased stretch (basic and acidic residues) spans 12–34; sequence PHYDDNGHRLQDLPHGSYEEEAS. Residues 54–66 are compositionally biased toward polar residues; that stretch reads QHGSSTTRPVSGY. 6 helical membrane-spanning segments follow: residues 579-599, 624-644, 659-679, 711-731, 840-860, and 879-899; these read IFSTVLTWFSLASYWLTTTVI, IINTIVKYVYLGFLLLQFILA, SFVVFGIIQVYVVIDALYLVV, IIIIALAATFGLYFVASFMYL, LVTFWIFSNAFLAVCITSDGV, and ALLWSNAVVALFRFIGACWFL.

The protein belongs to the chitin synthase family. Class III subfamily.

Its subcellular location is the cell membrane. The enzyme catalyses [(1-&gt;4)-N-acetyl-beta-D-glucosaminyl](n) + UDP-N-acetyl-alpha-D-glucosamine = [(1-&gt;4)-N-acetyl-beta-D-glucosaminyl](n+1) + UDP + H(+). Polymerizes chitin, a structural polymer of the cell wall and septum, by transferring the sugar moiety of UDP-GlcNAc to the non-reducing end of the growing chitin polymer. The protein is Chitin synthase G (chsG) of Aspergillus fumigatus (strain ATCC MYA-4609 / CBS 101355 / FGSC A1100 / Af293) (Neosartorya fumigata).